The primary structure comprises 788 residues: Integrin beta-6 (788 aa).

A signal peptide spans 1–21 (MGIELLCLFFLFLGRNDHVQG). In terms of domain architecture, PSI spans 22-71 (GCALGGAETCEDCLLIGPQCAWCAQENFTHPSGVGERCDTPANLLAKGCQ). The Extracellular portion of the chain corresponds to 22–709 (GCALGGAETC…KDCPKPPNIP (688 aa)). Disulfide bonds link Cys-23/Cys-41, Cys-31/Cys-454, Cys-34/Cys-59, Cys-44/Cys-70, Cys-197/Cys-204, Cys-252/Cys-293, Cys-394/Cys-406, Cys-426/Cys-452, Cys-456/Cys-476, Cys-467/Cys-479, Cys-481/Cys-490, Cys-492/Cys-519, Cys-502/Cys-517, Cys-511/Cys-522, Cys-524/Cys-537, Cys-539/Cys-560, Cys-544/Cys-558, Cys-552/Cys-563, and Cys-565/Cys-574. N-linked (GlcNAc...) asparagine glycosylation is found at Asn-48 and Asn-97. The 241-residue stretch at 131–371 (YPVDLYYLMD…QLIISAYEEL (241 aa)) folds into the VWFA domain. Positions 140, 142, and 144 each coordinate Mg(2+). Ca(2+) contacts are provided by Ser-144, Asp-147, Asp-148, and Glu-179. Asn-235, Asp-237, Pro-239, and Glu-240 together coordinate Ca(2+). Glu-240 lines the Mg(2+) pocket. A glycan (N-linked (GlcNAc...) asparagine) is linked at Asn-260. Ca(2+)-binding residues include Asp-271 and Lys-355. N-linked (GlcNAc...) asparagine glycosylation is found at Asn-387 and Asn-396. 4 consecutive I-EGF domains span residues 456–491 (CQKEVEVNSSKCHHGNGSFQCGVCACHPGHMGPRCE), 492–538 (CGED…PYCQ), 539–575 (CDNFSCVRHKGLLCGGNGDCDCGECVCRSGWTGEYCN), and 576–615 (CTTSTDSCVSEDGVLCSGRGDCVCGKCVCTNPGASGPTCE). Asn-463 and Asn-471 each carry an N-linked (GlcNAc...) asparagine glycan. Asn-541 carries N-linked (GlcNAc...) asparagine glycosylation. An N-linked (GlcNAc...) asparagine glycan is attached at Asn-575. Disulfide bonds link Cys-576-Cys-599, Cys-583-Cys-597, Cys-591-Cys-602, Cys-604-Cys-614, Cys-617-Cys-620, Cys-624-Cys-670, Cys-630-Cys-649, Cys-633-Cys-645, and Cys-678-Cys-702. The helical transmembrane segment at 710 to 730 (MIMLGVSLAILLIGVVLLCIW) threads the bilayer. An interaction with HAX1 region spans residues 731–758 (KLLVSFHDRKEVAKFEAERSKAKWQTGT). At 731–788 (KLLVSFHDRKEVAKFEAERSKAKWQTGTNPLYRGSTSTFKNVTYKHREKQKVDLSTDC) the chain is on the cytoplasmic side.

It belongs to the integrin beta chain family. In terms of assembly, heterodimer of an alpha and a beta subunit. Interacts with FLNB. Interacts with HAX1. ITGAV:ITGB6 interacts with FBN1. ITGAV:ITGB6 interacts with TGFB1. (Microbial infection) Integrin ITGAV:ITGB6 interacts with coxsackievirus A9, coxsackievirus B1 capsid proteins. As to quaternary structure, (Microbial infection) Integrin ITGAV:ITGB6 interacts with herpes simplex virus-1/HHV-1 gH:gL proteins.

The protein resides in the cell membrane. The protein localises to the cell junction. Its subcellular location is the focal adhesion. In terms of biological role, integrin alpha-V:beta-6 (ITGAV:ITGB6) is a receptor for fibronectin and cytotactin. It recognizes the sequence R-G-D in its ligands. Internalization of integrin alpha-V/beta-6 via clathrin-mediated endocytosis promotes carcinoma cell invasion. ITGAV:ITGB6 acts as a receptor for fibrillin-1 (FBN1) and mediates R-G-D-dependent cell adhesion to FBN1. Integrin alpha-V:beta-6 (ITGAV:ITGB6) mediates R-G-D-dependent release of transforming growth factor beta-1 (TGF-beta-1) from regulatory Latency-associated peptide (LAP), thereby playing a key role in TGF-beta-1 activation. Functionally, (Microbial infection) Integrin ITGAV:ITGB6 acts as a receptor for Coxsackievirus A9 and Coxsackievirus B1. Its function is as follows. (Microbial infection) Integrin ITGAV:ITGB6 acts as a receptor for Herpes simplex virus-1/HHV-1. The polypeptide is Integrin beta-6 (ITGB6) (Homo sapiens (Human)).